The chain runs to 688 residues: MARQYPLEKFRNFGIMAHIDAGKTTTTERILFYTGRNHKIGETHDGASTMDWMAQEQERGITITSAATTCFWKGYELNIIDTPGHVDFTVEVERSLRVLDGAVTVLDAKSGVEPQTETVWRQADKYGVPRMIYVNKMDATGADYYNCINTVRERLQANAVAIQIPIGQEDQFQGMVDLLTNQAIIFKDDLGKDIEVSDVPADLADKAEEYRAAMIEAIAETDEELMMKYLEGEELTLEELKVALRKATINNEIIPVICGSSYKNKGVQQMIDGVVDYLPSPLDIPAVKGTNLDGEEEVREASDDAPMSALAFKIATDPFVGRLAFTRVYSGVLESGSYVLNSTKGKKERIGRLVKMHANSREEVESLEAAELGAVIGLKNTTTGDTLCTEAAPIILEKMEFPEPVISIAIEPKTKAGQEKMGIALSKLAEEDPTFKTWTDQETGQTIIAGMGELHLDIIVDRLQREFKVECNVGAPQVAYKETIKKAVEAEAKFARQSGGRGQYGHCKIEMIPTEGEYEFENAIVGGAIPREYIPAVDNGIREAAESGIIAGYPVINFKIRLFDGSYHDVDSSEMAFKIAGSMAFKNAMAKADAVLLEPIMKVEITVPEEYMGDVIGDVNSRRGRMEGMDSRNGAQIIRAFIPLSEMFGYATALRSRTQGRGTYAMEFDHYDDVPKSIQEEVAGKKNK.

One can recognise a tr-type G domain in the interval 8-282 (EKFRNFGIMA…GVVDYLPSPL (275 aa)). GTP contacts are provided by residues 17-24 (AHIDAGKT), 81-85 (DTPGH), and 135-138 (NKMD).

The protein belongs to the TRAFAC class translation factor GTPase superfamily. Classic translation factor GTPase family. EF-G/EF-2 subfamily.

Its subcellular location is the cytoplasm. In terms of biological role, catalyzes the GTP-dependent ribosomal translocation step during translation elongation. During this step, the ribosome changes from the pre-translocational (PRE) to the post-translocational (POST) state as the newly formed A-site-bound peptidyl-tRNA and P-site-bound deacylated tRNA move to the P and E sites, respectively. Catalyzes the coordinated movement of the two tRNA molecules, the mRNA and conformational changes in the ribosome. The polypeptide is Elongation factor G (Clostridium perfringens (strain ATCC 13124 / DSM 756 / JCM 1290 / NCIMB 6125 / NCTC 8237 / Type A)).